The sequence spans 317 residues: Nuclear distribution protein nudE homolog (317 aa).

Positions Thr29–Arg180 form a coiled coil. The interval Asn186–Ser205 is disordered.

Belongs to the nudE family.

It localises to the cytoplasm. The protein localises to the cytoskeleton. The protein resides in the microtubule organizing center. Its subcellular location is the centrosome. It is found in the spindle. Functionally, chaperone protein with functions in nuclear localization. Required for centrosome duplication and formation and function of the mitotic spindle. In postmitotic neurons, acts with nudC downstream of dar1 to ensure correct positioning of the nuclei in primary dendrites and as a consequence, is required for determining multipolar neuron morphology. This is Nuclear distribution protein nudE homolog from Drosophila melanogaster (Fruit fly).